The sequence spans 461 residues: Fibrinogen C domain-containing protein 1 (461 aa).

Residues 1–24 are disordered; the sequence is MVNDRWKTMGGAAQLEDRPRDKPQ. The Cytoplasmic segment spans residues 1–33; the sequence is MVNDRWKTMGGAAQLEDRPRDKPQRPSCGYVLC. Residues 15-24 show a composition bias toward basic and acidic residues; that stretch reads LEDRPRDKPQ. The chain crosses the membrane as a helical; Signal-anchor for type II membrane protein span at residues 34–54; it reads TVLLALAVLLAVAVTGAVLFL. Residues 55–461 are Extracellular-facing; it reads NHAHAPGTAP…MKIRPVREDR (407 aa). The tract at residues 214–238 is disordered; sequence GRPRNKADLQRAPARGTRPRGCATG. One can recognise a Fibrinogen C-terminal domain in the interval 235–458; that stretch reads CATGSRPRDC…FSEMKIRPVR (224 aa). Cys244 and Cys273 form a disulfide bridge. Asn340 carries an N-linked (GlcNAc...) asparagine glycan. Residues Asp393 and Asp395 each coordinate Ca(2+). An intrachain disulfide couples Cys401 to Cys414.

As to quaternary structure, homotetramer; disulfide-linked. In terms of tissue distribution, expressed in the small and large intestinal epithelial cells with a highly polarized localization to the apical surface corresponding to the brush border and in the ducts of the salivary gland.

Its subcellular location is the membrane. Functionally, acetyl group-binding receptor which shows a high-affinity and calcium-dependent binding to acetylated structures such as chitin, some N-acetylated carbohydrates, and amino acids, but not to their non-acetylated counterparts. Can facilitate the endocytosis of acetylated components. This is Fibrinogen C domain-containing protein 1 (FIBCD1) from Homo sapiens (Human).